The chain runs to 98 residues: NADH-ubiquinone oxidoreductase chain 4L (98 aa).

3 consecutive transmembrane segments (helical) span residues 1–21, 30–50, and 61–81; these read MSLVYMNTALAFSISMLGLLM, LLCLEGMMLSLFTLGAITILT, and IVLLVFAACEAAVGLSLLVMV.

The protein belongs to the complex I subunit 4L family. As to quaternary structure, core subunit of respiratory chain NADH dehydrogenase (Complex I) which is composed of 45 different subunits.

The protein resides in the mitochondrion inner membrane. It carries out the reaction a ubiquinone + NADH + 5 H(+)(in) = a ubiquinol + NAD(+) + 4 H(+)(out). Its function is as follows. Core subunit of the mitochondrial membrane respiratory chain NADH dehydrogenase (Complex I) which catalyzes electron transfer from NADH through the respiratory chain, using ubiquinone as an electron acceptor. Part of the enzyme membrane arm which is embedded in the lipid bilayer and involved in proton translocation. The sequence is that of NADH-ubiquinone oxidoreductase chain 4L (MT-ND4L) from Crocidura russula (Greater white-toothed shrew).